Reading from the N-terminus, the 970-residue chain is Translation initiation factor IF-2 (970 aa).

Disordered regions lie at residues 54-270 and 328-348; these read KILA…TATQ and DKRR…KSLS. Positions 87-96 are enriched in low complexity; it reads QEAQPVEAQP. Residues 98–112 show a composition bias toward polar residues; that stretch reads YEEQPSYEEQPSYEE. Positions 121 to 149 are enriched in low complexity; sequence EVAAEAAPEPVEEPASSPEGGAPAGGAEP. Composition is skewed to pro residues over residues 150–160 and 168–182; these read QPAPEAPPPSA and PSAP…PAPS. Residues 183 to 253 are compositionally biased toward low complexity; that stretch reads VPAGAQPPGA…PHGPGAQPGQ (71 aa). The region spanning 469-638 is the tr-type G domain; the sequence is IRPPVVTVMG…ALQSEVLELK (170 aa). The interval 478–485 is G1; that stretch reads GHVDHGKT. 478–485 provides a ligand contact to GTP; the sequence is GHVDHGKT. The segment at 503–507 is G2; sequence GITQH. The G3 stretch occupies residues 524-527; sequence DTPG. Residues 524 to 528 and 578 to 581 each bind GTP; these read DTPGH and NKID. A G4 region spans residues 578–581; sequence NKID. The tract at residues 614–616 is G5; sequence SAR.

Belongs to the TRAFAC class translation factor GTPase superfamily. Classic translation factor GTPase family. IF-2 subfamily.

The protein localises to the cytoplasm. Functionally, one of the essential components for the initiation of protein synthesis. Protects formylmethionyl-tRNA from spontaneous hydrolysis and promotes its binding to the 30S ribosomal subunits. Also involved in the hydrolysis of GTP during the formation of the 70S ribosomal complex. The polypeptide is Translation initiation factor IF-2 (Anaeromyxobacter sp. (strain Fw109-5)).